The chain runs to 334 residues: Eukaryotic translation initiation factor 3 subunit H (334 aa).

The 133-residue stretch at 20–152 (VQCDGLAAMK…LKAYRLTPQA (133 aa)) folds into the MPN domain.

The protein belongs to the eIF-3 subunit H family. In terms of assembly, component of the eukaryotic translation initiation factor 3 (eIF-3) complex.

It localises to the cytoplasm. Its function is as follows. Component of the eukaryotic translation initiation factor 3 (eIF-3) complex, which is involved in protein synthesis of a specialized repertoire of mRNAs and, together with other initiation factors, stimulates binding of mRNA and methionyl-tRNAi to the 40S ribosome. The eIF-3 complex specifically targets and initiates translation of a subset of mRNAs involved in cell proliferation. In Anopheles gambiae (African malaria mosquito), this protein is Eukaryotic translation initiation factor 3 subunit H.